The following is a 167-amino-acid chain: CASP-like protein 3 (167 aa).

Over 1-2 (MK) the chain is Cytoplasmic. A helical transmembrane segment spans residues 3 to 23 (IIAIAPRIGAAVLSLVAFSVM). At 24-48 (ASTGERRSGAGSTFKVKFSDFQAYN) the chain is on the extracellular side. A helical transmembrane segment spans residues 49 to 69 (YLIALNVILFVYSTVQLVMLV). Over 70-80 (NSNHNSSFSSP) the chain is Cytoplasmic. A helical transmembrane segment spans residues 81-101 (FKWVLGVYICDQLLAFLLFSA). Topologically, residues 102-137 (SSSAATASELSRHGLHNIWPPACATWKLWTFCSKAE) are extracellular. Residues 138-158 (AAVAMSFLSSFFIITSSILSG) traverse the membrane as a helical segment. At 159–167 (YHLSKVPAV) the chain is on the cytoplasmic side.

Belongs to the Casparian strip membrane proteins (CASP) family. As to quaternary structure, homodimer and heterodimers.

It localises to the cell membrane. The protein is CASP-like protein 3 of Osmunda lancea (Fern).